Consider the following 115-residue polypeptide: NADH-ubiquinone oxidoreductase chain 3 (115 aa).

3 consecutive transmembrane segments (helical) span residues 4 to 24 (LMIL…AFWL), 55 to 75 (FFLV…LLPL), and 84 to 104 (INMM…GLAY).

Belongs to the complex I subunit 3 family. In terms of assembly, core subunit of respiratory chain NADH dehydrogenase (Complex I) which is composed of 45 different subunits. Interacts with TMEM186. Interacts with TMEM242.

It is found in the mitochondrion inner membrane. The catalysed reaction is a ubiquinone + NADH + 5 H(+)(in) = a ubiquinol + NAD(+) + 4 H(+)(out). In terms of biological role, core subunit of the mitochondrial membrane respiratory chain NADH dehydrogenase (Complex I) which catalyzes electron transfer from NADH through the respiratory chain, using ubiquinone as an electron acceptor. Essential for the catalytic activity of complex I. This chain is NADH-ubiquinone oxidoreductase chain 3, found in Podomys floridanus (Florida mouse).